A 485-amino-acid chain; its full sequence is Protein nucleotidyltransferase YdiU (485 aa).

Residues G85, G87, R88, K108, D120, G121, R171, and R178 each contribute to the ATP site. Catalysis depends on D249, which acts as the Proton acceptor. The Mg(2+) site is built by N250 and D259. D259 is an ATP binding site. The segment at 462-485 is disordered; that stretch reads LPTTPNYQDPPADGDRSYQTFCGT.

Belongs to the SELO family. It depends on Mg(2+) as a cofactor. The cofactor is Mn(2+).

The catalysed reaction is L-seryl-[protein] + ATP = 3-O-(5'-adenylyl)-L-seryl-[protein] + diphosphate. The enzyme catalyses L-threonyl-[protein] + ATP = 3-O-(5'-adenylyl)-L-threonyl-[protein] + diphosphate. It carries out the reaction L-tyrosyl-[protein] + ATP = O-(5'-adenylyl)-L-tyrosyl-[protein] + diphosphate. It catalyses the reaction L-histidyl-[protein] + UTP = N(tele)-(5'-uridylyl)-L-histidyl-[protein] + diphosphate. The catalysed reaction is L-seryl-[protein] + UTP = O-(5'-uridylyl)-L-seryl-[protein] + diphosphate. The enzyme catalyses L-tyrosyl-[protein] + UTP = O-(5'-uridylyl)-L-tyrosyl-[protein] + diphosphate. Functionally, nucleotidyltransferase involved in the post-translational modification of proteins. It can catalyze the addition of adenosine monophosphate (AMP) or uridine monophosphate (UMP) to a protein, resulting in modifications known as AMPylation and UMPylation. The protein is Protein nucleotidyltransferase YdiU of Teredinibacter turnerae (strain ATCC 39867 / T7901).